Reading from the N-terminus, the 248-residue chain is uncharacterized protein (248 aa).

A coiled-coil region spans residues 33–57; that stretch reads EWQLSEGQKRCEEINRQNRQLRVEK.

This is an uncharacterized protein from Escherichia coli (strain K12).